The sequence spans 186 residues: Nascent polypeptide-associated complex subunit beta (186 aa).

The NAC-A/B domain maps to 65-130 (GADDKKLQTT…GEEKELTELV (66 aa)). Positions 153-186 (QNMQKQAGAEGKKDEDEDDIPDLVEGENFESNVE) are disordered. Positions 167–186 (EDEDDIPDLVEGENFESNVE) are enriched in acidic residues.

The protein belongs to the NAC-beta family. In terms of assembly, part of the nascent polypeptide-associated complex (NAC), consisting of egd2 and egd1. NAC associates with ribosomes via egd1.

The protein localises to the cytoplasm. Its subcellular location is the nucleus. Its function is as follows. Component of the nascent polypeptide-associated complex (NAC), a dynamic component of the ribosomal exit tunnel, protecting the emerging polypeptides from interaction with other cytoplasmic proteins to ensure appropriate nascent protein targeting. The NAC complex also promotes mitochondrial protein import by enhancing productive ribosome interactions with the outer mitochondrial membrane and blocks the inappropriate interaction of ribosomes translating non-secretory nascent polypeptides with translocation sites in the membrane of the endoplasmic reticulum. EGD1 may act as a transcription factor that exert a negative effect on the expression of several genes that are transcribed by RNA polymerase II. This is Nascent polypeptide-associated complex subunit beta (egd1) from Aspergillus fumigatus (strain ATCC MYA-4609 / CBS 101355 / FGSC A1100 / Af293) (Neosartorya fumigata).